Here is a 21-residue protein sequence, read N- to C-terminus: Snake venom serine protease jerdonase (21 aa).

The Peptidase S1 domain maps to 1–21 (IIGGDECNINEHPFLVALYDA).

Belongs to the peptidase S1 family. Snake venom subfamily. As to quaternary structure, monomer. Glycosylated; contains 35.8% neutral carbohydrate. As to expression, expressed by the venom gland.

Its subcellular location is the secreted. Its activity is regulated as follows. Inhibited by PMSF and soybean trypsin inhibitor. Partially inhibited by L-cysteine and DTT. Not affected by EDTA. In terms of biological role, multifunctional venom serine protease that has fibrino(geno)lytic activity towards the A alpha-chain of human fibrinogen (FGA) and a slow activity towards the B beta-chain (FGB). Also hydrolyzes bovine low-molecular-mass kininogen and releases bradykinin. Catalyzes the hydrolysis of BAEE, S-2238 and S-2302. The chain is Snake venom serine protease jerdonase from Protobothrops jerdonii (Jerdon's pitviper).